Here is a 604-residue protein sequence, read N- to C-terminus: Elongation factor 4 (604 aa).

Positions 10–191 (KNIRNFSIIA…KIITTIPAPS (182 aa)) constitute a tr-type G domain. GTP contacts are provided by residues 22–27 (DHGKST) and 138–141 (NKID).

Belongs to the TRAFAC class translation factor GTPase superfamily. Classic translation factor GTPase family. LepA subfamily.

The protein resides in the cell inner membrane. The catalysed reaction is GTP + H2O = GDP + phosphate + H(+). Functionally, required for accurate and efficient protein synthesis under certain stress conditions. May act as a fidelity factor of the translation reaction, by catalyzing a one-codon backward translocation of tRNAs on improperly translocated ribosomes. Back-translocation proceeds from a post-translocation (POST) complex to a pre-translocation (PRE) complex, thus giving elongation factor G a second chance to translocate the tRNAs correctly. Binds to ribosomes in a GTP-dependent manner. This Helicobacter acinonychis (strain Sheeba) protein is Elongation factor 4.